We begin with the raw amino-acid sequence, 56 residues long: Trypsin inhibitor 1 (56 aa).

Positions 1-25 (MATTMAKLITLVVLAILAFVEVSVS) are cleaved as a signal peptide. Positions 26–39 (GYKTSISTITIEDN) are excised as a propeptide. The segment at residues 40 to 53 (GRCTKSIPPICFPD) is a cross-link (cyclopeptide (Gly-Asp)). An intrachain disulfide couples Cys-42 to Cys-50. Positions 54-56 (GRP) are excised as a propeptide.

Post-translationally, this is a cyclic peptide.

Functionally, inhibits trypsin, cathepsin G, elastase, chymotrypsin and thrombin. Does not inhibit factor Xa. This is Trypsin inhibitor 1 from Helianthus annuus (Common sunflower).